The chain runs to 265 residues: Undecaprenyl-diphosphatase (265 aa).

Helical transmembrane passes span 41 to 61 (IAYTFGLFMEMGSIGSALIYF), 75 to 95 (LKFLVVVTALTGIVGVPLYVI), 104 to 124 (YNPSIPMIFLGIALIADGIYI), 137 to 157 (LSTKEMILIGIAQGIAALPGV), 180 to 200 (YSYLAYIPAAIGSVGTTLLFT), 215 to 235 (GIALAVISALLTGLVVIGFLL), and 244 to 264 (YLIDFMLGGIAVLVSMLGLII).

This sequence belongs to the UppP family.

It is found in the cell membrane. The enzyme catalyses di-trans,octa-cis-undecaprenyl diphosphate + H2O = di-trans,octa-cis-undecaprenyl phosphate + phosphate + H(+). Its function is as follows. Catalyzes the dephosphorylation of undecaprenyl diphosphate (UPP). The protein is Undecaprenyl-diphosphatase of Saccharolobus islandicus (strain Y.G.57.14 / Yellowstone #1) (Sulfolobus islandicus).